The following is an 881-amino-acid chain: Mechanosensitive ion channel protein 4 (881 aa).

Positions 35–245 (FWHNDKSSKP…EEEDPFSEED (211 aa)) are disordered. Residues 56–66 (FMRRSSEKSEE) are compositionally biased toward basic and acidic residues. Polar residues-rich tracts occupy residues 73 to 82 (LINQFLNKQK), 100 to 118 (QKNT…SASP), and 206 to 230 (TPRS…NQGG). Over residues 234-245 (LEEEEDPFSEED) the composition is skewed to acidic residues. 4 consecutive transmembrane segments (helical) span residues 255 to 275 (ICVW…SLIC), 297 to 317 (VMVL…KLFV), 339 to 359 (KPVQ…FLFD), and 377 to 397 (VLIC…LVKV). Residues 457–501 (GPKAVSSPPQVTVGSGRLQKSPSRVGKSPVLSRSGSKKEGGEEGI) are disordered. Residues 463 to 478 (SPPQVTVGSGRLQKSP) show a composition bias toward polar residues. Positions 492–501 (SKKEGGEEGI) are enriched in basic and acidic residues. Helical transmembrane passes span 643 to 663 (IVDV…LGIA) and 678 to 698 (VVFV…FVFV).

The protein belongs to the MscS (TC 1.A.23) family.

It localises to the membrane. Its function is as follows. Mechanosensitive channel that opens in response to stretch forces in the membrane lipid bilayer. This chain is Mechanosensitive ion channel protein 4 (MSL4), found in Arabidopsis thaliana (Mouse-ear cress).